We begin with the raw amino-acid sequence, 267 residues long: Hydroxyethylthiazole kinase (267 aa).

Met-46 contacts substrate. Positions 122 and 168 each coordinate ATP. Gly-195 contributes to the substrate binding site.

Belongs to the Thz kinase family. Requires Mg(2+) as cofactor.

It catalyses the reaction 5-(2-hydroxyethyl)-4-methylthiazole + ATP = 4-methyl-5-(2-phosphooxyethyl)-thiazole + ADP + H(+). Its pathway is cofactor biosynthesis; thiamine diphosphate biosynthesis; 4-methyl-5-(2-phosphoethyl)-thiazole from 5-(2-hydroxyethyl)-4-methylthiazole: step 1/1. Its function is as follows. Catalyzes the phosphorylation of the hydroxyl group of 4-methyl-5-beta-hydroxyethylthiazole (THZ). This Moorella thermoacetica (strain ATCC 39073 / JCM 9320) protein is Hydroxyethylthiazole kinase.